The sequence spans 1088 residues: DEAD-box ATP-dependent RNA helicase 40 (1088 aa).

Disordered regions lie at residues 1–28 (MATTEDTPASAGPRYAPEDPTLPQPWKG), 47–178 (TQYE…QYAH), and 192–254 (TQGL…QNTH). A2 is subject to N-acetylalanine. The region spanning 20 to 54 (PTLPQPWKGLIDGSTGILYYWNPETNVTQYERPSA) is the WW domain. Low complexity-rich tracts occupy residues 87–137 (VGHV…SQSM), 148–171 (QTYQPTTQQQQQGMQNQHSQMPQQ), and 200–215 (QTPQGGPHGQQFPSQQ). The span at 222–231 (PKREGDEFHG) shows a compositional bias: basic and acidic residues. The segment covering 236 to 254 (GFSQPHLPNSERSPSQNTH) has biased composition (polar residues). Positions 435-463 (ITFESSGLPPEILRELLSAGFPSPTPIQA) match the Q motif motif. A Helicase ATP-binding domain is found at 466–640 (WPIALQSRDI…SDLLVNPVQV (175 aa)). 479-486 (AKTGSGKT) is an ATP binding site. Residues 588–591 (DEAD) carry the DEAD box motif. The region spanning 669-813 (RLEQILRSQE…QVPPQVRDIA (145 aa)) is the Helicase C-terminal domain. Composition is skewed to gly residues over residues 861–885 (EGGFGGREGGFGGREGGFGGRGGRF), 893–902 (GRGGNRGRGF), 911–920 (NVGGRGGFGR), and 932–944 (FGRGSGRGFGRGV). The disordered stretch occupies residues 861-1033 (EGGFGGREGG…RRDRAPRVSG (173 aa)). The segment covering 945–963 (GRFDNRRGRSRSRSPDLVR) has biased composition (basic and acidic residues). The segment covering 969 to 983 (SSYSRSRSRSGSYSR) has biased composition (low complexity). Residues 984-1013 (SRSRSRSWSRSRSRSPRHSRDRGGHNRSRS) show a composition bias toward basic residues.

The protein belongs to the DEAD box helicase family. DDX5/DBP2 subfamily.

Its subcellular location is the nucleus. The enzyme catalyses ATP + H2O = ADP + phosphate + H(+). ATP-dependent RNA helicase involved nonsense-mediated mRNA decay and ribosome biogenesis through rRNA processing. This is DEAD-box ATP-dependent RNA helicase 40 (RH40) from Arabidopsis thaliana (Mouse-ear cress).